The sequence spans 587 residues: Aspartate--tRNA ligase (587 aa).

Residue Glu174 coordinates L-aspartate. Residues 198 to 201 are aspartate; sequence QITK. Arg220 contributes to the L-aspartate binding site. ATP contacts are provided by residues 220–222 and Gln229; that span reads RDE. His443 contributes to the L-aspartate binding site. Glu477 serves as a coordination point for ATP. Position 484 (Arg484) interacts with L-aspartate. 529–532 contributes to the ATP binding site; the sequence is GLDR.

This sequence belongs to the class-II aminoacyl-tRNA synthetase family. Type 1 subfamily. Homodimer.

It is found in the cytoplasm. It carries out the reaction tRNA(Asp) + L-aspartate + ATP = L-aspartyl-tRNA(Asp) + AMP + diphosphate. Its function is as follows. Catalyzes the attachment of L-aspartate to tRNA(Asp) in a two-step reaction: L-aspartate is first activated by ATP to form Asp-AMP and then transferred to the acceptor end of tRNA(Asp). The polypeptide is Aspartate--tRNA ligase (Streptococcus pneumoniae serotype 19F (strain G54)).